Reading from the N-terminus, the 62-residue chain is Single-pass membrane and coiled-coil domain-containing protein 4 homolog (62 aa).

Positions 1 to 27 (MRQLPGKAAKETRKMKRERKQQNKEGH) are disordered. A coiled-coil region spans residues 9–31 (AKETRKMKRERKQQNKEGHNRVV). Residues 30-50 (VVTVAIPVCLAVFVMLIVYVY) traverse the membrane as a helical segment.

Belongs to the SMCO4 family.

Its subcellular location is the membrane. The sequence is that of Single-pass membrane and coiled-coil domain-containing protein 4 homolog from Nematostella vectensis (Starlet sea anemone).